A 152-amino-acid chain; its full sequence is Transmembrane protein 35B (152 aa).

Residues 1-21 form the signal peptide; sequence MLVSLGALRVLLGIFFTLTGA. Transmembrane regions (helical) follow at residues 62 to 82, 85 to 105, and 111 to 131; these read AAVG…PPVL, ISNV…VVLE, and YIPA…QFLV.

It belongs to the DoxX family.

The protein resides in the membrane. The chain is Transmembrane protein 35B from Rattus norvegicus (Rat).